The following is a 162-amino-acid chain: NADH-quinone oxidoreductase subunit I (162 aa).

2 consecutive 4Fe-4S ferredoxin-type domains span residues 53–83 (LRRY…IESE) and 93–122 (TRYD…ETHI). Residues Cys63, Cys66, Cys69, Cys73, Cys102, Cys105, Cys108, and Cys112 each contribute to the [4Fe-4S] cluster site.

This sequence belongs to the complex I 23 kDa subunit family. As to quaternary structure, NDH-1 is composed of 14 different subunits. Subunits NuoA, H, J, K, L, M, N constitute the membrane sector of the complex. It depends on [4Fe-4S] cluster as a cofactor.

The protein resides in the cell inner membrane. The catalysed reaction is a quinone + NADH + 5 H(+)(in) = a quinol + NAD(+) + 4 H(+)(out). Functionally, NDH-1 shuttles electrons from NADH, via FMN and iron-sulfur (Fe-S) centers, to quinones in the respiratory chain. The immediate electron acceptor for the enzyme in this species is believed to be ubiquinone. Couples the redox reaction to proton translocation (for every two electrons transferred, four hydrogen ions are translocated across the cytoplasmic membrane), and thus conserves the redox energy in a proton gradient. This chain is NADH-quinone oxidoreductase subunit I, found in Bordetella bronchiseptica (strain ATCC BAA-588 / NCTC 13252 / RB50) (Alcaligenes bronchisepticus).